The primary structure comprises 421 residues: MLDLKFVRTNPEVVKEALKKRNSNVSLDAFLEQEEERRKLLFEVESLKAKRNTVSEEVGRRKKHGEDAEQLILEMREVGQKVKNLEDKLGEIEQSMEAVLYEIPNIPHESVPVGADEEANVEVRTWGTPRSFDFEPLAHYEIGEKLDILDFARAGKVTGARFTFYKGLGAKLERALISFMLDRHSAKGYVEVLPPYMVHRNSMIGTGQLPKFEEDAFKVAGTDYFLIPTAEVPVTNMYREEILEAEQLPIHHCAYSACFRAEAGSAGRDTRGLIRQHQFNKVELVKFAFPENSYEELESLTRDAESILQELELPYRVMALSTGDLGFTSAKTYDLEVWLPSFNTYREISSCSNFEDFQARRANIRFRRAPKAKPEFLHTLNGSGLAIGRTVSAILENYQEADGRVRVPKALQPYLGVEYIG.

229–231 (TAE) serves as a coordination point for L-serine. Position 260 to 262 (260 to 262 (RAE)) interacts with ATP. Glutamate 283 is an L-serine binding site. Residue 347-350 (EISS) coordinates ATP. Serine 383 contributes to the L-serine binding site.

It belongs to the class-II aminoacyl-tRNA synthetase family. Type-1 seryl-tRNA synthetase subfamily. As to quaternary structure, homodimer. The tRNA molecule binds across the dimer.

The protein resides in the cytoplasm. The catalysed reaction is tRNA(Ser) + L-serine + ATP = L-seryl-tRNA(Ser) + AMP + diphosphate + H(+). The enzyme catalyses tRNA(Sec) + L-serine + ATP = L-seryl-tRNA(Sec) + AMP + diphosphate + H(+). Its pathway is aminoacyl-tRNA biosynthesis; selenocysteinyl-tRNA(Sec) biosynthesis; L-seryl-tRNA(Sec) from L-serine and tRNA(Sec): step 1/1. In terms of biological role, catalyzes the attachment of serine to tRNA(Ser). Is also able to aminoacylate tRNA(Sec) with serine, to form the misacylated tRNA L-seryl-tRNA(Sec), which will be further converted into selenocysteinyl-tRNA(Sec). The protein is Serine--tRNA ligase of Desulfitobacterium hafniense (strain Y51).